A 354-amino-acid chain; its full sequence is Protein PHLOEM PROTEIN 2-LIKE A8 (354 aa).

Residues 12–179 (TGPQVFINFR…EMILEIQKAL (168 aa)) enclose the TIR domain. The active site involves Glu86.

It carries out the reaction NAD(+) + H2O = ADP-D-ribose + nicotinamide + H(+). The sequence is that of Protein PHLOEM PROTEIN 2-LIKE A8 (PP2A8) from Arabidopsis thaliana (Mouse-ear cress).